A 1028-amino-acid polypeptide reads, in one-letter code: Beta-galactosidase (1028 aa).

Asn-104 and Asp-203 together coordinate substrate. Residue Asp-203 participates in Na(+) binding. Mg(2+)-binding residues include Glu-418, His-420, and Glu-463. Residues Glu-463 and 539 to 542 (EYAH) each bind substrate. The active-site Proton donor is the Glu-463. Glu-539 (nucleophile) is an active-site residue. Asn-599 is a binding site for Mg(2+). Na(+) is bound by residues Phe-603 and Asn-606. Positions 606 and 1004 each coordinate substrate.

Belongs to the glycosyl hydrolase 2 family. Homotetramer. Requires Mg(2+) as cofactor. Na(+) is required as a cofactor.

The enzyme catalyses Hydrolysis of terminal non-reducing beta-D-galactose residues in beta-D-galactosides.. The polypeptide is Beta-galactosidase (Enterobacter sp. (strain 638)).